We begin with the raw amino-acid sequence, 362 residues long: MILMAAPMNSITDISGIQVGHYHRLDPDASLGAGWACGVTVVLTPPGTVGAVDCRGGVPGTRETDLLDPANSVRFVDAVLLAGGSAYGLAAADGVMRWLEEHERGVVMLGGVVPIVPGAVIFDLSVGDFHCRPTAEFGYLACQAAYDAAVGGQDATVAVGTVGAGVGARAGVLKGGVGTASITLESGPTVGAVVVVNSVGDVVDRATGLPWMTDLIDEFALRPPSPEQIAGFAQLKSPLSALNTTIGVVATDATLSPAACQRVAMAAQDGLARTIRPAHTALDGDTVFALATGAVEATATADVPVAMSPETGLITEVGAAADDCLARAVLVAVLAAESVAGIPTYCGMFPGAFGTTIGGGNR.

Transmembrane regions (helical) follow at residues 32-52, 75-95, 106-126, 148-168, 176-196, 287-307, and 329-349; these read GAGW…VGAV, FVDA…ADGV, VVML…DLSV, AAVG…GVGA, GVGT…VVVV, VFAL…PVAM, and VLVA…CGMF.

Belongs to the peptidase S58 family.

The protein localises to the cell membrane. In terms of biological role, aminopeptidase. This is an uncharacterized protein from Mycobacterium leprae (strain TN).